The chain runs to 303 residues: Elongation factor Ts (303 aa).

Residues 81–84 (TDFV) form an involved in Mg(2+) ion dislocation from EF-Tu region.

The protein belongs to the EF-Ts family.

Its subcellular location is the cytoplasm. Its function is as follows. Associates with the EF-Tu.GDP complex and induces the exchange of GDP to GTP. It remains bound to the aminoacyl-tRNA.EF-Tu.GTP complex up to the GTP hydrolysis stage on the ribosome. The sequence is that of Elongation factor Ts from Mesomycoplasma hyopneumoniae (strain J / ATCC 25934 / NCTC 10110) (Mycoplasma hyopneumoniae).